The sequence spans 198 residues: Iron-sulfur flavoprotein MJ0731 (198 aa).

[4Fe-4S] cluster-binding residues include cysteine 46, cysteine 49, cysteine 52, and cysteine 59.

The protein belongs to the SsuE family. Isf subfamily. As to quaternary structure, homodimer. It depends on FMN as a cofactor. [4Fe-4S] cluster is required as a cofactor.

Redox-active protein probably involved in electron transport. The chain is Iron-sulfur flavoprotein MJ0731 from Methanocaldococcus jannaschii (strain ATCC 43067 / DSM 2661 / JAL-1 / JCM 10045 / NBRC 100440) (Methanococcus jannaschii).